The primary structure comprises 391 residues: Elongation factor Tu (391 aa).

Residues 10-201 (KPHVNIGTIG…AVDDYIPTPE (192 aa)) form the tr-type G domain. The segment at 19-26 (GHVDHGKT) is G1. 19 to 26 (GHVDHGKT) contacts GTP. T26 provides a ligand contact to Mg(2+). Residues 55-59 (GITIS) form a G2 region. Positions 76-79 (DCPG) are G3. Residues 76-80 (DCPGH) and 131-134 (NKVD) contribute to the GTP site. The G4 stretch occupies residues 131 to 134 (NKVD). Residues 169–171 (SAL) are G5.

Belongs to the TRAFAC class translation factor GTPase superfamily. Classic translation factor GTPase family. EF-Tu/EF-1A subfamily. Monomer.

The protein localises to the cytoplasm. The catalysed reaction is GTP + H2O = GDP + phosphate + H(+). Functionally, GTP hydrolase that promotes the GTP-dependent binding of aminoacyl-tRNA to the A-site of ribosomes during protein biosynthesis. The sequence is that of Elongation factor Tu from Paracoccus denitrificans (strain Pd 1222).